The sequence spans 159 residues: Endoribonuclease YbeY (159 aa).

Zn(2+)-binding residues include histidine 114, histidine 118, and histidine 124.

The protein belongs to the endoribonuclease YbeY family. It depends on Zn(2+) as a cofactor.

The protein resides in the cytoplasm. Single strand-specific metallo-endoribonuclease involved in late-stage 70S ribosome quality control and in maturation of the 3' terminus of the 16S rRNA. This is Endoribonuclease YbeY from Pectobacterium atrosepticum (strain SCRI 1043 / ATCC BAA-672) (Erwinia carotovora subsp. atroseptica).